Consider the following 418-residue polypeptide: Ciliary microtubule-associated protein 2 (418 aa).

As to expression, sperm.

The protein is Ciliary microtubule-associated protein 2 of Homo sapiens (Human).